The sequence spans 481 residues: RAC-beta serine/threonine-protein kinase (481 aa).

N-acetylmethionine is present on methionine 1. A PH domain is found at 5–108 (SVIKEGWLHK…WIRAIQMVAN (104 aa)). At serine 34 the chain carries Phosphoserine. A disulfide bridge connects residues cysteine 60 and cysteine 77. A Phosphoserine modification is found at serine 126. 2 O-linked (GlcNAc) serine glycosylation sites follow: serine 128 and serine 131. Residues 152-409 (FDYLKLLGKG…AKEVMEHRFF (258 aa)) form the Protein kinase domain. ATP-binding positions include 158–166 (LGKGTFGKV) and lysine 181. The active-site Proton acceptor is aspartate 275. The Mn(2+) site is built by asparagine 280 and aspartate 293. O-linked (GlcNAc) threonine glycosylation is present at threonine 306. Threonine 309 carries the phosphothreonine; by PDPK1 modification. Threonine 313 carries an O-linked (GlcNAc) threonine glycan. Residues 410 to 481 (LSINWQDVVQ…QFSYSASIRE (72 aa)) enclose the AGC-kinase C-terminal domain. The residue at position 447 (serine 447) is a Phosphoserine. Phosphothreonine is present on threonine 451. Phosphoserine is present on residues serine 461, serine 474, and serine 478. Serine 474 is a glycosylation site (O-linked (GlcNAc) serine; alternate).

This sequence belongs to the protein kinase superfamily. AGC Ser/Thr protein kinase family. RAC subfamily. As to quaternary structure, interacts with BTBD10. Interacts with KCTD20. Interacts (via PH domain) with MTCP1, TCL1A and TCL1B; this interaction may facilitate AKT2 oligomerization and phosphorylation, hence increasing kinase activity. Interacts with PHB2; this interaction may be important for myogenic differentiation. Interacts (when phosphorylated) with CLIP3; this interaction promotes cell membrane localization. Interacts with WDFY2 (via WD repeats 1-3). In terms of processing, phosphorylation on Thr-309 and Ser-474 is required for full activity. Phosphorylation of the activation loop at Thr-309 by PDPK1/PDK1 is a prerequisite for full activation. Phosphorylated and activated by PDPK1/PDK1 in the presence of phosphatidylinositol 3,4,5-trisphosphate. Phosphorylation by mTORC2 in response to growth factors plays a key role in AKT1 activation: mTORC2 phosphorylates different sites depending on the context, such as Ser-474 or Ser-478, thereby facilitating subsequent phosphorylation of the activation loop by PDPK1/PDK1. Post-translationally, ubiquitinated; undergoes both 'Lys-48'- and 'Lys-63'-linked polyubiquitination. TRAF6-induced 'Lys-63'-linked AKT2 ubiquitination. When fully phosphorylated and translocated into the nucleus, undergoes 'Lys-48'-polyubiquitination catalyzed by TTC3, leading to its degradation by the proteasome. O-GlcNAcylation at Thr-306 and Thr-313 inhibits activating phosphorylation at Thr-309 via disrupting the interaction between AKT and PDPK1/PDK1. In terms of tissue distribution, expressed in adipocytes and hepatocytes (at protein level). Expressed at low levels in skeletal muscle (at protein level).

Its subcellular location is the cytoplasm. The protein localises to the nucleus. It is found in the cell membrane. It localises to the early endosome. It carries out the reaction L-seryl-[protein] + ATP = O-phospho-L-seryl-[protein] + ADP + H(+). The enzyme catalyses L-threonyl-[protein] + ATP = O-phospho-L-threonyl-[protein] + ADP + H(+). Phosphorylation at Thr-309 (in the kinase domain) and Ser-474 (in the C-terminal regulatory region) is required for full activation. In adipocytes and hepatocytes, the activation is induced by insulin. AKT2 phosphorylation of PKP1 is induced by insulin. Its function is as follows. Serine/threonine kinase closely related to AKT1 and AKT3. All 3 enzymes, AKT1, AKT2 and AKT3, are collectively known as AKT kinase. AKT regulates many processes including metabolism, proliferation, cell survival, growth and angiogenesis, through the phosphorylation of a range of downstream substrates. Over 100 substrates have been reported so far, although for most of them, the precise AKT kinase catalyzing the reaction was not specified. AKT regulates glucose uptake by mediating insulin-induced translocation of the SLC2A4/GLUT4 glucose transporter to the cell surface. Phosphorylation of PTPN1 at 'Ser-50' negatively modulates its phosphatase activity preventing dephosphorylation of the insulin receptor and the attenuation of insulin signaling. Phosphorylation of TBC1D4 triggers the binding of this effector to inhibitory 14-3-3 proteins, which is required for insulin-stimulated glucose transport. AKT also regulates the storage of glucose in the form of glycogen by phosphorylating GSK3A at 'Ser-21' and GSK3B at 'Ser-9', resulting in inhibition of its kinase activity. Phosphorylation of GSK3 isoforms by AKT is also thought to be one mechanism by which cell proliferation is driven. AKT also regulates cell survival via the phosphorylation of MAP3K5 (apoptosis signal-related kinase). Phosphorylation of 'Ser-83' decreases MAP3K5 kinase activity stimulated by oxidative stress and thereby prevents apoptosis. AKT mediates insulin-stimulated protein synthesis by phosphorylating TSC2 at 'Ser-939' and 'Thr-1462', thereby activating mTORC1 signaling and leading to both phosphorylation of 4E-BP1 and in activation of RPS6KB1. AKT is involved in the phosphorylation of members of the FOXO factors (Forkhead family of transcription factors), leading to binding of 14-3-3 proteins and cytoplasmic localization. In particular, FOXO1 is phosphorylated at 'Thr-24', 'Ser-256' and 'Ser-319'. FOXO3 and FOXO4 are phosphorylated on equivalent sites. AKT has an important role in the regulation of NF-kappa-B-dependent gene transcription and positively regulates the activity of CREB1 (cyclic AMP (cAMP)-response element binding protein). The phosphorylation of CREB1 induces the binding of accessory proteins that are necessary for the transcription of pro-survival genes such as BCL2 and MCL1. AKT phosphorylates 'Ser-454' on ATP citrate lyase (ACLY), thereby potentially regulating ACLY activity and fatty acid synthesis. Activates the 3B isoform of cyclic nucleotide phosphodiesterase (PDE3B) via phosphorylation of 'Ser-273', resulting in reduced cyclic AMP levels and inhibition of lipolysis. Phosphorylates PIKFYVE on 'Ser-318', which results in increased PI(3)P-5 activity. The Rho GTPase-activating protein DLC1 is another substrate and its phosphorylation is implicated in the regulation cell proliferation and cell growth. AKT plays a role as key modulator of the AKT-mTOR signaling pathway controlling the tempo of the process of newborn neurons integration during adult neurogenesis, including correct neuron positioning, dendritic development and synapse formation. Signals downstream of phosphatidylinositol 3-kinase (PI(3)K) to mediate the effects of various growth factors such as platelet-derived growth factor (PDGF), epidermal growth factor (EGF), insulin and insulin-like growth factor 1 (IGF1). AKT mediates the antiapoptotic effects of IGF1. Essential for the SPATA13-mediated regulation of cell migration and adhesion assembly and disassembly. May be involved in the regulation of the placental development. In response to lysophosphatidic acid stimulation, inhibits the ciliogenesis cascade. In this context, phosphorylates WDR44, hence stabilizing its interaction with Rab11 and preventing the formation of the ciliogenic Rab11-FIP3-RAB3IP complex. Also phosphorylates RAB3IP/Rabin8, thus may affect RAB3IP guanine nucleotide exchange factor (GEF) activity toward Rab8, which is important for cilia growth. Phosphorylates PKP1, facilitating its interaction with YWHAG and translocation to the nucleus, ultimately resulting in a reduction in keratinocyte intercellular adhesion. Phosphorylation of PKP1 increases PKP1 protein stability, translocation to the cytoplasm away from desmosome plaques and PKP1-driven cap-dependent translation. Several AKT2-specific substrates have been identified, including ANKRD2, C2CD5, CLK2 and PITX2. May play a role in myoblast differentiation. In this context, may act through PITX2 phosphorylation. Unphosphorylated PITX2 associates with an ELAVL1/HuR-containing complex, which stabilizes cyclin mRNA and ensuring cell proliferation. Phosphorylation by AKT2 impairs this association, leading to CCND1 mRNA destabilization and progression towards differentiation. Also involved in the negative regulation of myogenesis in response to stress conditions. In this context, acts by phosphorylating ANKRD2. May also be a key regulator of glucose uptake. Regulates insulin-stimulated glucose transport by the increase of glucose transporter GLUT4 translocation from intracellular stores to the plasma membrane. In this context, acts by phosphorylating C2CD5/CDP138 on 'Ser-197' in insulin-stimulated adipocytes. Through the phosphorylation of CLK2 on 'Thr-343', involved in insulin-regulated suppression of hepatic gluconeogenesis. This Rattus norvegicus (Rat) protein is RAC-beta serine/threonine-protein kinase.